The chain runs to 117 residues: Ribosome-binding factor A (117 aa).

It belongs to the RbfA family. As to quaternary structure, monomer. Binds 30S ribosomal subunits, but not 50S ribosomal subunits or 70S ribosomes.

The protein resides in the cytoplasm. In terms of biological role, one of several proteins that assist in the late maturation steps of the functional core of the 30S ribosomal subunit. Associates with free 30S ribosomal subunits (but not with 30S subunits that are part of 70S ribosomes or polysomes). Required for efficient processing of 16S rRNA. May interact with the 5'-terminal helix region of 16S rRNA. This chain is Ribosome-binding factor A, found in Bacillus licheniformis (strain ATCC 14580 / DSM 13 / JCM 2505 / CCUG 7422 / NBRC 12200 / NCIMB 9375 / NCTC 10341 / NRRL NRS-1264 / Gibson 46).